The following is a 207-amino-acid chain: MPTLQNARGVYLITPDTRDTAQLLACTLPLLPHITWLQYRNKQADAALRLAQATALRAACTAHGVPLIINDDAALAQQVGADGVHLGEDDGEVAAARALLGASAIIGVSCYDEIERARAAAAAGANYVAFGAFFPTATKVTTRRATPALLHEAAALGLPRVAIGGITPSQVPELVTAGADLIAVVSGVYAAADPVAAVQAYRAGFTQ.

4-amino-2-methyl-5-(diphosphooxymethyl)pyrimidine contacts are provided by residues glutamine 38–lysine 42 and asparagine 70. Aspartate 71 and aspartate 90 together coordinate Mg(2+). Serine 109 is a binding site for 4-amino-2-methyl-5-(diphosphooxymethyl)pyrimidine. Residue threonine 136 to threonine 138 coordinates 2-[(2R,5Z)-2-carboxy-4-methylthiazol-5(2H)-ylidene]ethyl phosphate. Lysine 139 contributes to the 4-amino-2-methyl-5-(diphosphooxymethyl)pyrimidine binding site. 2-[(2R,5Z)-2-carboxy-4-methylthiazol-5(2H)-ylidene]ethyl phosphate contacts are provided by residues glycine 165 and valine 185–serine 186.

Belongs to the thiamine-phosphate synthase family. Requires Mg(2+) as cofactor.

It carries out the reaction 2-[(2R,5Z)-2-carboxy-4-methylthiazol-5(2H)-ylidene]ethyl phosphate + 4-amino-2-methyl-5-(diphosphooxymethyl)pyrimidine + 2 H(+) = thiamine phosphate + CO2 + diphosphate. It catalyses the reaction 2-(2-carboxy-4-methylthiazol-5-yl)ethyl phosphate + 4-amino-2-methyl-5-(diphosphooxymethyl)pyrimidine + 2 H(+) = thiamine phosphate + CO2 + diphosphate. The catalysed reaction is 4-methyl-5-(2-phosphooxyethyl)-thiazole + 4-amino-2-methyl-5-(diphosphooxymethyl)pyrimidine + H(+) = thiamine phosphate + diphosphate. Its pathway is cofactor biosynthesis; thiamine diphosphate biosynthesis; thiamine phosphate from 4-amino-2-methyl-5-diphosphomethylpyrimidine and 4-methyl-5-(2-phosphoethyl)-thiazole: step 1/1. In terms of biological role, condenses 4-methyl-5-(beta-hydroxyethyl)thiazole monophosphate (THZ-P) and 2-methyl-4-amino-5-hydroxymethyl pyrimidine pyrophosphate (HMP-PP) to form thiamine monophosphate (TMP). In Xanthomonas campestris pv. campestris (strain 8004), this protein is Thiamine-phosphate synthase.